We begin with the raw amino-acid sequence, 429 residues long: Tol-Pal system protein TolB (429 aa).

Positions 1-28 are cleaved as a signal peptide; sequence MSITPSFSRRSVVSLLAAGAFSSMSAFA.

This sequence belongs to the TolB family. In terms of assembly, the Tol-Pal system is composed of five core proteins: the inner membrane proteins TolA, TolQ and TolR, the periplasmic protein TolB and the outer membrane protein Pal. They form a network linking the inner and outer membranes and the peptidoglycan layer.

The protein localises to the periplasm. Part of the Tol-Pal system, which plays a role in outer membrane invagination during cell division and is important for maintaining outer membrane integrity. In Polaromonas naphthalenivorans (strain CJ2), this protein is Tol-Pal system protein TolB.